A 178-amino-acid polypeptide reads, in one-letter code: Large ribosomal subunit protein bL25 (178 aa).

This sequence belongs to the bacterial ribosomal protein bL25 family. CTC subfamily. Part of the 50S ribosomal subunit; part of the 5S rRNA/L5/L18/L25 subcomplex. Contacts the 5S rRNA. Binds to the 5S rRNA independently of L5 and L18.

Its function is as follows. This is one of the proteins that binds to the 5S RNA in the ribosome where it forms part of the central protuberance. This chain is Large ribosomal subunit protein bL25, found in Nitratiruptor sp. (strain SB155-2).